The sequence spans 529 residues: 56 kDa type-specific antigen (529 aa).

An N-terminal signal peptide occupies residues Met1–Ala22. Residues Leu67–Phe87 form a helical membrane-spanning segment. The segment covering Gly106–Ser116 has biased composition (basic and acidic residues). 2 disordered regions span residues Gly106–Thr134 and Asp392–Glu424. A helical transmembrane segment spans residues Thr477 to Ala492.

It is found in the cell membrane. Functionally, may be an adherent factor for rickettsial adsorption to the host-cell surface and a determinant of virulence of individual rickettsial strain. It is the major outer membrane protein. The chain is 56 kDa type-specific antigen from Orientia tsutsugamushi (Rickettsia tsutsugamushi).